The primary structure comprises 256 residues: Stanniocalcin (256 aa).

Residues methionine 1–alanine 18 form the signal peptide. A propeptide spanning residues threonine 19–arginine 33 is cleaved from the precursor. Residue asparagine 62 is glycosylated (N-linked (GlcNAc...) asparagine). The interval glutamine 204–leucine 241 is disordered.

The protein belongs to the stanniocalcin family. Homodimer; disulfide-linked. In terms of tissue distribution, produced and secreted by the corpuscles of Stannius.

It localises to the secreted. Its function is as follows. Its primary function is the prevention of hypercalcemia. Upon release into the circulation, it lowers calcium transport by the gills, thereby reducing its rate of influx from the environment into the extracellular compartment. STC also stimulates phosphate reabsorption by renal proximal tubules. The consequence of this action is increased levels of plasma phosphate, which combines with excess calcium and promotes its disposal into bone and scales. The polypeptide is Stanniocalcin (stc) (Oncorhynchus mykiss (Rainbow trout)).